Consider the following 540-residue polypeptide: Phosphoenolpyruvate carboxykinase (ATP) (540 aa).

Substrate is bound at residue arginine 65. Lysine 87 carries the N6-acetyllysine modification. Positions 207 and 213 each coordinate substrate. Residues lysine 213, histidine 232, and glycine 248–threonine 256 each bind ATP. Mn(2+) contacts are provided by lysine 213 and histidine 232. Position 269 (aspartate 269) interacts with Mn(2+). ATP-binding positions include glutamate 297, arginine 333, arginine 449–isoleucine 450, and threonine 455. Residue arginine 333 participates in substrate binding. An N6-acetyllysine modification is found at lysine 523.

Belongs to the phosphoenolpyruvate carboxykinase (ATP) family. Monomer. Mn(2+) serves as cofactor.

It is found in the cytoplasm. The enzyme catalyses oxaloacetate + ATP = phosphoenolpyruvate + ADP + CO2. Its pathway is carbohydrate biosynthesis; gluconeogenesis. Functionally, involved in the gluconeogenesis. Catalyzes the conversion of oxaloacetate (OAA) to phosphoenolpyruvate (PEP) through direct phosphoryl transfer between the nucleoside triphosphate and OAA. The protein is Phosphoenolpyruvate carboxykinase (ATP) of Escherichia coli O7:K1 (strain IAI39 / ExPEC).